The following is a 297-amino-acid chain: Guanylate kinase (297 aa).

A Guanylate kinase-like domain is found at 5-184; it reads GKVIIISGPS…AVSKITDILI (180 aa). ATP is bound at residue 12-19; that stretch reads GPSGVGKG. The interval 205–297 is unknown; sequence ENIVDQKYTY…IKQRSDFSGD (93 aa).

It belongs to the guanylate kinase family.

The protein localises to the cytoplasm. The catalysed reaction is GMP + ATP = GDP + ADP. Essential for recycling GMP and indirectly, cGMP. This chain is Guanylate kinase (gmk), found in Mesoplasma florum (strain ATCC 33453 / NBRC 100688 / NCTC 11704 / L1) (Acholeplasma florum).